The primary structure comprises 267 residues: Trehalose-phosphate phosphatase (267 aa).

Residue Asp20 is the Nucleophile of the active site. Positions 20, 22, and 198 each coordinate Mg(2+). 20 to 22 is a binding site for substrate; the sequence is DLD.

The protein belongs to the trehalose phosphatase family. Requires Mg(2+) as cofactor.

It catalyses the reaction alpha,alpha-trehalose 6-phosphate + H2O = alpha,alpha-trehalose + phosphate. It participates in glycan biosynthesis; trehalose biosynthesis. Functionally, removes the phosphate from trehalose 6-phosphate to produce free trehalose. This is Trehalose-phosphate phosphatase (otsB) from Salmonella typhimurium (strain SL1344).